Here is a 50-residue protein sequence, read N- to C-terminus: Small ribosomal subunit protein eS31 (50 aa).

Residues Cys22, Cys25, Cys40, and Cys43 each coordinate Zn(2+). The C4-type zinc-finger motif lies at 22-43 (CPRCGPGVFMADHGDRWACGKC).

This sequence belongs to the eukaryotic ribosomal protein eS31 family. In terms of assembly, part of the 30S ribosomal subunit. Zn(2+) serves as cofactor.

The protein is Small ribosomal subunit protein eS31 of Pyrococcus furiosus (strain ATCC 43587 / DSM 3638 / JCM 8422 / Vc1).